Reading from the N-terminus, the 646-residue chain is Threonine--tRNA ligase (646 aa).

The 63-residue stretch at 1-63 folds into the TGS domain; that stretch reads MAQISLTFPD…ETDAKIAIHT (63 aa). Positions 247–544 are catalytic; sequence DHRKLGREME…LIENYAGKLP (298 aa). Residues Cys344, His395, and His521 each contribute to the Zn(2+) site.

Belongs to the class-II aminoacyl-tRNA synthetase family. As to quaternary structure, homodimer. Zn(2+) serves as cofactor.

Its subcellular location is the cytoplasm. The catalysed reaction is tRNA(Thr) + L-threonine + ATP = L-threonyl-tRNA(Thr) + AMP + diphosphate + H(+). In terms of biological role, catalyzes the attachment of threonine to tRNA(Thr) in a two-step reaction: L-threonine is first activated by ATP to form Thr-AMP and then transferred to the acceptor end of tRNA(Thr). Also edits incorrectly charged L-seryl-tRNA(Thr). The sequence is that of Threonine--tRNA ligase from Cereibacter sphaeroides (strain ATCC 17023 / DSM 158 / JCM 6121 / CCUG 31486 / LMG 2827 / NBRC 12203 / NCIMB 8253 / ATH 2.4.1.) (Rhodobacter sphaeroides).